The sequence spans 179 residues: Stathmin-2 (179 aa).

A membrane attachment region spans residues 1-26 (MAKTAMAYKEKMKELSMLSLICSCFY). Phosphoserine is present on S16. Residues C22 and C24 are each lipidated (S-palmitoyl cysteine). An SLD domain is found at 38 to 179 (DDMEVKQINK…NKELQVELSG (142 aa)). A regulatory/phosphorylation domain region spans residues 39-96 (DMEVKQINKRASGQAFELILKPPSPISEAPRTLASPKKKDLSLEEIQKKLEAAEGRRK). A Phosphoserine modification is found at S50. A phosphoserine; by MAPK8 mark is found at S62 and S73. Residues 75–179 (KKKDLSLEEI…NKELQVELSG (105 aa)) adopt a coiled-coil conformation. A phosphoserine mark is found at S80 and S97.

Belongs to the stathmin family. Interacts with ITM2C. Interacts with MAPK8. Interacts with KIFBP. Interacts (via the N-terminal region) with CIB1 (via C-terminal region); the interaction is direct, occurs in a calcium-dependent manner and attenuates the neurite outgrowth inhibition of STMN2. In terms of processing, sumoylated. Post-translationally, phosphorylated by MAPK9 and MAPK10 in the developing brain cortex. Phosphorylated mostly by MAPK8. N-terminal palmitoylation promotes specific anchoring to the cytosolic leaflet of Golgi membranes and subsequent vesicular trafficking along dendrites and axons. Neuronal Stathmins are substrates for palmitoyltransferases ZDHHC3, ZDHHC7 and ZDHHC15. As to expression, expressed in neurons (at protein level). Present in growth cones and abundant in developing neurons.

It is found in the cytoplasm. Its subcellular location is the perinuclear region. The protein resides in the cell projection. It localises to the growth cone. The protein localises to the axon. It is found in the membrane. Its subcellular location is the golgi apparatus. The protein resides in the endosome. It localises to the lamellipodium. Regulator of microtubule stability. When phosphorylated by MAPK8, stabilizes microtubules and consequently controls neurite length in cortical neurons. In the developing brain, negatively regulates the rate of exit from multipolar stage and retards radial migration from the ventricular zone. The polypeptide is Stathmin-2 (Stmn2) (Rattus norvegicus (Rat)).